A 297-amino-acid polypeptide reads, in one-letter code: Magnetosome protein MamB (297 aa).

At 1–12 (MKFENCRDCREE) the chain is on the cytoplasmic side. The transmembrane domain (TMD) stretch occupies residues 1–214 (MKFENCRDCR…GLMDSSVDTE (214 aa)). The helical transmembrane segment at 13 to 33 (VVWWAFTADICMTLFKGILGL) threads the bilayer. At 34–83 (MSGSVALVADSLHSGADVVASGVTQLSLKISNKPADERYPFGYGNIQYIS) the chain is on the lumenal side. The helical transmembrane segment at 84–104 (SAIVGSLLLIGASFLMYGSVV) threads the bilayer. The Cytoplasmic segment spans residues 105–112 (KLISGTYE). A helical membrane pass occupies residues 113-133 (APSIFAALGASVTVIVNELMY). At 134 to 164 (RYQICVGNENNSPAIIANAWDNRSDAISSAA) the chain is on the lumenal side. A helical membrane pass occupies residues 165–185 (VMVGVIASVIGFPIADTIAAI). Residues 186 to 297 (GVSALVGHIG…PAPAAVTVRV (112 aa)) are Cytoplasmic-facing. A C-terminal domain (CTD) region spans residues 215–297 (LLQTAWQIAT…PAPAAVTVRV (83 aa)).

Belongs to the cation diffusion facilitator (CDF) transporter (TC 2.A.4) family. As to quaternary structure, forms homodimers via its C-terminal domain, may form higher order multimers that are sensitive to reducing agent. Probably interacts with MamE. Interacts with MamM via their C-terminal domains.

The protein localises to the cell inner membrane. It localises to the magnetosome membrane. Functionally, plays a dual, essential role in magnetosome formation; required for magnetosome vesicle formation as well as biomineralization. Requires heterodimerization with MamM for stability. Probably binds and transports iron. One of 7 genes (mamLQBIEMO) able to induce magnetosome membrane biogenesis; coexpression of mamLQRBIEMO in a deletion of the 17 gene mamAB operon restores magnetosome vesicle formation but not magnetite biosynthesis. This Magnetospirillum gryphiswaldense (strain DSM 6361 / JCM 21280 / NBRC 15271 / MSR-1) protein is Magnetosome protein MamB.